Consider the following 546-residue polypeptide: Probable protein kinase UbiB (546 aa).

Residues 124-502 (DFDIQPLASA…HVRQSQSRYL (379 aa)) enclose the Protein kinase domain. Residues 130–138 (LASASIAQV) and K153 contribute to the ATP site. D288 acts as the Proton acceptor in catalysis. 2 consecutive transmembrane segments (helical) span residues 501–521 (YLLG…VNRP) and 522–542 (EWGL…LVGW).

This sequence belongs to the ABC1 family. UbiB subfamily.

The protein resides in the cell inner membrane. It participates in cofactor biosynthesis; ubiquinone biosynthesis [regulation]. Functionally, is probably a protein kinase regulator of UbiI activity which is involved in aerobic coenzyme Q (ubiquinone) biosynthesis. The protein is Probable protein kinase UbiB of Salmonella enteritidis PT4 (strain P125109).